The following is a 342-amino-acid chain: MSAFTPASEVLLRHSDDFESARVLFAGDLQDDLPARLDTAASRAHTQQFHHWQVLNRQMGDTVRFSLVAEAADVAECDTLIYYWPKNKPEAQFQLMNLLSLLPVGSDIFVVGENRSGVRSAEQMLAEYAPLNKVDSARRCGLYHGRLEKQPTFDADAFWGEYTLDNLTIKTLPGVFSRDGLDVGSQLLLSTLEPHTKGKVLDVGCGAGVLAAALASHSPKVRLTLCDVSAPAVEASRATLAANGLAGDVFASNVFSEVNGRFDMIISNPPFHDGLQTSLEAAQALIRGAVRHLNSGGELRIVANAFLPYPQVLDETFGFHEVIAQTGRFKVYRTIMTRQAKK.

Belongs to the methyltransferase superfamily. RsmC family. As to quaternary structure, monomer.

The protein localises to the cytoplasm. The catalysed reaction is guanosine(1207) in 16S rRNA + S-adenosyl-L-methionine = N(2)-methylguanosine(1207) in 16S rRNA + S-adenosyl-L-homocysteine + H(+). Its function is as follows. Specifically methylates the guanine in position 1207 of 16S rRNA in the 30S particle. This Klebsiella pneumoniae subsp. pneumoniae (strain ATCC 700721 / MGH 78578) protein is Ribosomal RNA small subunit methyltransferase C.